Here is a 1423-residue protein sequence, read N- to C-terminus: DNA-directed RNA polymerase subunit beta' (1423 aa).

Zn(2+) contacts are provided by cysteine 71, cysteine 73, cysteine 86, and cysteine 89. 3 residues coordinate Mg(2+): aspartate 461, aspartate 463, and aspartate 465. Positions 815, 889, 896, and 899 each coordinate Zn(2+).

This sequence belongs to the RNA polymerase beta' chain family. The RNAP catalytic core consists of 2 alpha, 1 beta, 1 beta' and 1 omega subunit. When a sigma factor is associated with the core the holoenzyme is formed, which can initiate transcription. Mg(2+) serves as cofactor. The cofactor is Zn(2+).

The enzyme catalyses RNA(n) + a ribonucleoside 5'-triphosphate = RNA(n+1) + diphosphate. Functionally, DNA-dependent RNA polymerase catalyzes the transcription of DNA into RNA using the four ribonucleoside triphosphates as substrates. This chain is DNA-directed RNA polymerase subunit beta', found in Actinobacillus pleuropneumoniae serotype 3 (strain JL03).